Here is an 867-residue protein sequence, read N- to C-terminus: Transcription factor E2F8 (867 aa).

Residues 38–58 are disordered; that stretch reads DFGPLTTPTKPKEGSQGEPWT. Residues serine 71 and serine 102 each carry the phosphoserine modification. 2 DNA-binding regions span residues 113 to 182 and 261 to 347; these read RKEK…TWHG and RKDK…KWTG. 3 disordered regions span residues 408 to 432, 532 to 616, and 771 to 800; these read RRKI…NSAP, QSVT…SGSK, and APEN…GQSV. Phosphoserine is present on residues serine 413 and serine 417. Polar residues-rich tracts occupy residues 413-432 and 532-556; these read SAPS…NSAP and QSVT…TGSK. The segment covering 557–567 has biased composition (basic and acidic residues); the sequence is DSTDATTEKAA. Residues 568-579 show a composition bias toward polar residues; it reads NDTSKASASTRP. Basic and acidic residues predominate over residues 594-604; sequence RTREPAGERGS. Polar residues predominate over residues 775-800; sequence AGTQQGRATNYDSPVPGQSQPNGQSV.

Belongs to the E2F/DP family. As to quaternary structure, homodimer and heterodimer: mainly forms homodimers and, to a lesser extent, heterodimers with E2F8. Dimerization is important for DNA-binding. Interacts with HIF1A.

The protein resides in the nucleus. Its function is as follows. Atypical E2F transcription factor that participates in various processes such as angiogenesis and polyploidization of specialized cells. Mainly acts as a transcription repressor that binds DNA independently of DP proteins and specifically recognizes the E2 recognition site 5'-TTTC[CG]CGC-3'. Directly represses transcription of classical E2F transcription factors such as E2F1: component of a feedback loop in S phase by repressing the expression of E2F1, thereby preventing p53/TP53-dependent apoptosis. Plays a key role in polyploidization of cells in placenta and liver by regulating the endocycle, probably by repressing genes promoting cytokinesis and antagonizing action of classical E2F proteins (E2F1, E2F2 and/or E2F3). Required for placental development by promoting polyploidization of trophoblast giant cells. Acts as a promoter of sprouting angiogenesis, possibly by acting as a transcription activator: associates with HIF1A, recognizes and binds the VEGFA promoter, which is different from canonical E2 recognition site, and activates expression of the VEGFA gene. This chain is Transcription factor E2F8 (E2F8), found in Homo sapiens (Human).